The chain runs to 367 residues: Eukaryotic translation initiation factor 3 subunit H (367 aa).

Residues Val-14–Phe-166 form the MPN domain.

This sequence belongs to the eIF-3 subunit H family. As to quaternary structure, component of the eukaryotic translation initiation factor 3 (eIF-3) complex.

The protein resides in the cytoplasm. In terms of biological role, component of the eukaryotic translation initiation factor 3 (eIF-3) complex, which is involved in protein synthesis of a specialized repertoire of mRNAs and, together with other initiation factors, stimulates binding of mRNA and methionyl-tRNAi to the 40S ribosome. The eIF-3 complex specifically targets and initiates translation of a subset of mRNAs involved in cell proliferation. The polypeptide is Eukaryotic translation initiation factor 3 subunit H (Botryotinia fuckeliana (strain B05.10) (Noble rot fungus)).